A 309-amino-acid chain; its full sequence is Cytochrome c biogenesis protein CcsA (309 aa).

8 helical membrane passes run 18–38 (LGLL…GAFF), 43–63 (FFIV…QLLF), 67–87 (ISGH…TWGI), 102–122 (IIPS…CFVL), 148–168 (VMLS…VLFI), 216–236 (SILI…VWAN), 250–267 (TWAF…HMRI), and 279–299 (LATT…FLGI).

The protein belongs to the CcmF/CycK/Ccl1/NrfE/CcsA family. May interact with ccs1.

The protein localises to the cellular thylakoid membrane. Its function is as follows. Required during biogenesis of c-type cytochromes (cytochrome c6 and cytochrome f) at the step of heme attachment. The protein is Cytochrome c biogenesis protein CcsA of Prochlorococcus marinus (strain MIT 9215).